The following is a 99-amino-acid chain: Small ribosomal subunit protein bS20 (99 aa).

The protein belongs to the bacterial ribosomal protein bS20 family.

Its function is as follows. Binds directly to 16S ribosomal RNA. This chain is Small ribosomal subunit protein bS20, found in Thermomicrobium roseum (strain ATCC 27502 / DSM 5159 / P-2).